Consider the following 576-residue polypeptide: Alkaline phosphatase PhoD (576 aa).

The signal sequence occupies residues 1-32 (MNSLLHHSFLKTVFSSLAIAIVTSSLSSVTIA). Zn(2+)-binding residues include Asp68 and Thr107. The active-site Phosphothreonine intermediate is the Thr107. A disulfide bridge links Cys108 with Cys144. Substrate contacts are provided by residues Asn128 and 188 to 190 (KDR). An intrachain disulfide couples Cys248 to Cys332. Positions 318, 322, 363, 364, and 508 each coordinate Zn(2+). A disulfide bond links Cys562 and Cys573.

In terms of assembly, monomer. Zn(2+) serves as cofactor.

It carries out the reaction a phosphate monoester + H2O = an alcohol + phosphate. Alkaline phosphatase with broad substrate specificity. Has phosphatase activity towards nucleotide and sugar phosphates with a preference to nucleotide phosphates. Has no phosphodiesterase activity. The chain is Alkaline phosphatase PhoD from Zymomonas mobilis subsp. mobilis (strain ATCC 31821 / ZM4 / CP4).